The following is a 145-amino-acid chain: GLLGLGYGGYGGYGGYGGYGHGLALAAAPAAIAAPAVVAAPAIAHAPAVAVAPAVAHAPAAVSTVSQVSYGTTHYAPAVAKVAAVAAPVAVAAPAIAAAPAVGLGYGHGLGYGHGVGLGYAAAAPALSLGYGGYGHGLSLGYGHH.

7 repeat units span residues 27–30, 33–37, 39–42, 86–89, 92–95, 98–101, and 123–126.

Its function is as follows. Component of the cuticle of migratory locust which contains more than 100 different structural proteins. The protein is Cuticle protein 65 of Locusta migratoria (Migratory locust).